Consider the following 370-residue polypeptide: 3-dehydroquinate synthase (370 aa).

NAD(+) is bound by residues 108–112 (GVVGD), 132–133 (TT), lysine 145, and lysine 154. Zn(2+) contacts are provided by glutamate 187, histidine 250, and histidine 268.

It belongs to the sugar phosphate cyclases superfamily. Dehydroquinate synthase family. Co(2+) is required as a cofactor. Zn(2+) serves as cofactor. It depends on NAD(+) as a cofactor.

The protein resides in the cytoplasm. The enzyme catalyses 7-phospho-2-dehydro-3-deoxy-D-arabino-heptonate = 3-dehydroquinate + phosphate. It functions in the pathway metabolic intermediate biosynthesis; chorismate biosynthesis; chorismate from D-erythrose 4-phosphate and phosphoenolpyruvate: step 2/7. Functionally, catalyzes the conversion of 3-deoxy-D-arabino-heptulosonate 7-phosphate (DAHP) to dehydroquinate (DHQ). The chain is 3-dehydroquinate synthase from Caulobacter vibrioides (strain NA1000 / CB15N) (Caulobacter crescentus).